We begin with the raw amino-acid sequence, 270 residues long: NFAT activation molecule 1 (270 aa).

An N-terminal signal peptide occupies residues 1-42 (MENQPVRWRALPGLPRPPGLPAAPWLLLGVLLLPGTLRLAGG). Residues 43-163 (QSVTHTGLPI…YREPPQSPQK (121 aa)) lie on the Extracellular side of the membrane. The Ig-like V-type domain maps to 50–150 (LPIMASLANT…RGSGTFILVR (101 aa)). Cys65 and Cys114 are disulfide-bonded. Residue Asn107 is glycosylated (N-linked (GlcNAc...) asparagine). A helical transmembrane segment spans residues 164–184 (LLLFGFTGLLSVLSVVGTALL). The Cytoplasmic portion of the chain corresponds to 185–270 (LWNKKRMRGP…GELNLVYENL (86 aa)). The segment at 190–219 (RMRGPGKDPTRKCPDPRSASSPKQHPSESV) is disordered. The span at 194–204 (PGKDPTRKCPD) shows a compositional bias: basic and acidic residues. Residues 207–219 (SASSPKQHPSESV) show a composition bias toward polar residues. Positions 209–237 (SSPKQHPSESVYTALQRRETEVYACIENE) constitute an ITAM domain. Tyr220 and Tyr231 each carry phosphotyrosine. A disordered region spans residues 234-262 (IENEDGSSPTAKQSPLSQERPHRFEDDGE). Residues 239–250 (GSSPTAKQSPLS) are compositionally biased toward polar residues.

As to quaternary structure, no direct interaction with the B-cell antigen receptor (BCR). Interacts with SYK; probably involved in BCR signaling. Interacts with ZAP70. In terms of processing, N-glycosylated. As to expression, highly expressed in neutrophils, primary monocytes, mast cells, monocytic cell lines and lymphocytes. Also expressed in spleen B and T-cells, and lung. Expressed at low level in non-immune tissue.

It localises to the cell membrane. In terms of biological role, may function in immune system as a receptor which activates via the calcineurin/NFAT-signaling pathway the downstream cytokine gene promoters. Activates the transcription of IL-13 and TNF-alpha promoters. May be involved in the regulation of B-cell, but not T-cell, development. Overexpression activates downstream effectors without ligand binding or antibody cross-linking. The sequence is that of NFAT activation molecule 1 (NFAM1) from Homo sapiens (Human).